A 325-amino-acid polypeptide reads, in one-letter code: Serpentine receptor class gamma-16 (325 aa).

The next 7 helical transmembrane spans lie at 25–45, 65–85, 87–107, 144–164, 187–207, 232–252, and 264–284; these read FCLYLIPGAILHVLILRILLI, VVSLVLIFWGIFFNRLFMFIP, LCPLVSPLFFEPSLFLKMYYW, LAVTTVFVVLALPFFGSWNLL, WASLSMFQSIFLLIALCFTII, FVSLFYSIAFLVVAVSQLIFV, and LLFQFFAFDFLTVGSAVIIML.

The protein belongs to the nematode receptor-like protein srg family.

Its subcellular location is the membrane. In Caenorhabditis elegans, this protein is Serpentine receptor class gamma-16 (srg-16).